A 438-amino-acid polypeptide reads, in one-letter code: Ubiquitin carboxyl-terminal hydrolase 27 (438 aa).

The region spanning arginine 78–glutamine 421 is the USP domain. The active-site Nucleophile is cysteine 87. The Proton acceptor role is filled by histidine 380.

This sequence belongs to the peptidase C19 family. As to quaternary structure, interacts with phosphorylated BCL2L11 isoform BIMEL; this interaction leads to BCL2L11 deubiquitination and stabilization.

It localises to the cytoplasm. The protein resides in the cytosol. The protein localises to the nucleus. It catalyses the reaction Thiol-dependent hydrolysis of ester, thioester, amide, peptide and isopeptide bonds formed by the C-terminal Gly of ubiquitin (a 76-residue protein attached to proteins as an intracellular targeting signal).. In terms of biological role, deubiquitinase involved in innate antiviral immunity by mediating deubiquitination of CGAS and RIGI. Negatively regulates RIGI by mediating 'Lys-63'-linked deubiquitination of RIGI, inhibiting type I interferon signaling. Also regulates 'Lys-63'-linked ubiquitination level of MDA5/IFIH1. Acts as a positive regulator of the cGAS-STING pathway by catalyzing 'Lys-48'-linked deubiquitination of CGAS, thereby promoting its stabilization. Can reduce the levels of BCL2L11/BIM ubiquitination and stabilize BCL2L11 in response to the RAF-MAPK-degradation signal. By acting on BCL2L11 levels, may counteract the anti-apoptotic effects of MAPK activity. The polypeptide is Ubiquitin carboxyl-terminal hydrolase 27 (Homo sapiens (Human)).